The primary structure comprises 163 residues: Peptide methionine sulfoxide reductase MsrA (163 aa).

Cys-10 is a catalytic residue.

The protein belongs to the MsrA Met sulfoxide reductase family.

The enzyme catalyses L-methionyl-[protein] + [thioredoxin]-disulfide + H2O = L-methionyl-(S)-S-oxide-[protein] + [thioredoxin]-dithiol. It carries out the reaction [thioredoxin]-disulfide + L-methionine + H2O = L-methionine (S)-S-oxide + [thioredoxin]-dithiol. Its function is as follows. Has an important function as a repair enzyme for proteins that have been inactivated by oxidation. Catalyzes the reversible oxidation-reduction of methionine sulfoxide in proteins to methionine. This Vesicomyosocius okutanii subsp. Calyptogena okutanii (strain HA) protein is Peptide methionine sulfoxide reductase MsrA.